A 173-amino-acid polypeptide reads, in one-letter code: Photosystem I assembly protein Ycf3 (173 aa).

3 TPR repeats span residues 35–68 (AYIY…EENK), 72–105 (GETL…NPKQ), and 120–153 (GRFA…YPGG).

The protein belongs to the Ycf3 family.

Its subcellular location is the cellular thylakoid membrane. Essential for the assembly of the photosystem I (PSI) complex. May act as a chaperone-like factor to guide the assembly of the PSI subunits. This is Photosystem I assembly protein Ycf3 from Prochlorococcus marinus subsp. pastoris (strain CCMP1986 / NIES-2087 / MED4).